The chain runs to 370 residues: Anhydro-N-acetylmuramic acid kinase (370 aa).

Position 13-20 (13-20 (GTSMDGID)) interacts with ATP.

It belongs to the anhydro-N-acetylmuramic acid kinase family.

The catalysed reaction is 1,6-anhydro-N-acetyl-beta-muramate + ATP + H2O = N-acetyl-D-muramate 6-phosphate + ADP + H(+). The protein operates within amino-sugar metabolism; 1,6-anhydro-N-acetylmuramate degradation. Its pathway is cell wall biogenesis; peptidoglycan recycling. In terms of biological role, catalyzes the specific phosphorylation of 1,6-anhydro-N-acetylmuramic acid (anhMurNAc) with the simultaneous cleavage of the 1,6-anhydro ring, generating MurNAc-6-P. Is required for the utilization of anhMurNAc either imported from the medium or derived from its own cell wall murein, and thus plays a role in cell wall recycling. In Rhizobium etli (strain ATCC 51251 / DSM 11541 / JCM 21823 / NBRC 15573 / CFN 42), this protein is Anhydro-N-acetylmuramic acid kinase.